We begin with the raw amino-acid sequence, 404 residues long: Cysteine desulfurase IscS (404 aa).

Residues 75–76, N155, Q183, and 203–205 contribute to the pyridoxal 5'-phosphate site; these read AT and SAH. K206 carries the post-translational modification N6-(pyridoxal phosphate)lysine. T243 lines the pyridoxal 5'-phosphate pocket. The Cysteine persulfide intermediate role is filled by C328. C328 lines the [2Fe-2S] cluster pocket.

Belongs to the class-V pyridoxal-phosphate-dependent aminotransferase family. NifS/IscS subfamily. As to quaternary structure, homodimer. Forms a heterotetramer with IscU, interacts with other sulfur acceptors. Requires pyridoxal 5'-phosphate as cofactor.

It localises to the cytoplasm. It carries out the reaction (sulfur carrier)-H + L-cysteine = (sulfur carrier)-SH + L-alanine. Its pathway is cofactor biosynthesis; iron-sulfur cluster biosynthesis. In terms of biological role, master enzyme that delivers sulfur to a number of partners involved in Fe-S cluster assembly, tRNA modification or cofactor biosynthesis. Catalyzes the removal of elemental sulfur atoms from cysteine to produce alanine. Functions as a sulfur delivery protein for Fe-S cluster synthesis onto IscU, an Fe-S scaffold assembly protein, as well as other S acceptor proteins. The chain is Cysteine desulfurase IscS from Colwellia psychrerythraea (strain 34H / ATCC BAA-681) (Vibrio psychroerythus).